We begin with the raw amino-acid sequence, 546 residues long: Probable E3 ubiquitin-protein ligase NGR_a03640 (546 aa).

A disordered region spans residues 1–70 (MNVQRPGLAV…RPWEGRPQEA (70 aa)). Residues 1–248 (MNVQRPGLAV…YAGPQIFLPM (248 aa)) are interaction with target proteins. The segment covering 22-48 (SEPGSPAAAARWVEASTEAEASAASSS) has biased composition (low complexity). The span at 58–67 (AEERPWEGRP) shows a compositional bias: basic and acidic residues. LRR repeat units lie at residues 104–125 (GLRR…LPGT), 126–144 (LLEL…DLPA), 145–166 (GLQR…LPAA), 167–186 (LEWL…MIPP), and 187–208 (ELIW…LLTQ). Positions 249–256 (GPVELARR) are linker. Residues 257–546 (PLHEVVADWL…KVLRGRGLEL (290 aa)) form the NEL domain. The interval 257–546 (PLHEVVADWL…KVLRGRGLEL (290 aa)) is E3 ubiquitin-protein ligase catalytic domain. The active-site Glycyl thioester intermediate is the Cys-338.

This sequence belongs to the LRR-containing bacterial E3 ligase family. Post-translationally, ubiquitinated in the presence of host E1 ubiquitin-activating enzyme, E2 ubiquitin-conjugating enzyme and ubiquitin.

The protein localises to the secreted. The protein resides in the host cytoplasm. Its function is as follows. Effector proteins function to alter host cell physiology and promote bacterial survival in host tissues. This protein is an E3 ubiquitin ligase that interferes with host's ubiquitination pathway. This Sinorhizobium fredii (strain NBRC 101917 / NGR234) protein is Probable E3 ubiquitin-protein ligase NGR_a03640.